We begin with the raw amino-acid sequence, 881 residues long: Lon protease (881 aa).

The segment covering 1–24 (MAKNTDIEHDAHEPAGHGDVRESA) has biased composition (basic and acidic residues). Residues 1–77 (MAKNTDIEHD…RAGEAEKGVP (77 aa)) are disordered. A compositionally biased stretch (polar residues) spans 49–59 (QTDTESAQGAA). Residues 65-77 (EVQRAGEAEKGVP) are compositionally biased toward basic and acidic residues. The 194-residue stretch at 94-287 (VHLIPLTGRP…EVFVYIKKEK (194 aa)) folds into the Lon N-terminal domain. 440–447 (GPPGVGKT) lines the ATP pocket. In terms of domain architecture, Lon proteolytic spans 679-861 (ANKVGTAVGL…EEVLSLAFPK (183 aa)). Catalysis depends on residues Ser767 and Lys810.

The protein belongs to the peptidase S16 family. In terms of assembly, homohexamer. Organized in a ring with a central cavity.

It localises to the cytoplasm. The catalysed reaction is Hydrolysis of proteins in presence of ATP.. Its function is as follows. ATP-dependent serine protease that mediates the selective degradation of mutant and abnormal proteins as well as certain short-lived regulatory proteins. Required for cellular homeostasis and for survival from DNA damage and developmental changes induced by stress. Degrades polypeptides processively to yield small peptide fragments that are 5 to 10 amino acids long. Binds to DNA in a double-stranded, site-specific manner. This is Lon protease from Treponema pallidum (strain Nichols).